We begin with the raw amino-acid sequence, 626 residues long: Nuclear RNA export factor 2 (626 aa).

The residue at position 34 (Ser34) is a Phosphoserine. Positions 124–203 constitute an RRM domain; the sequence is WFKVTIPYGI…IFVNHSTAPY (80 aa). 4 LRR repeats span residues 271-296, 297-320, 321-348, and 349-376; these read ELLS…EKAP, KVKT…VKGL, KLEE…AIRD, and CFPK…ETMK. The NTF2 domain maps to 391–541; it reads LVLQFLQQYY…LCIVNDELFV (151 aa). The TAP-C domain occupies 570-625; sequence QEQQEMVQAFSAQSGMKLEWSQKCLQDNEWNYTRAGQAFTMLQTEGKIPAEAFKQI.

This sequence belongs to the NXF family. In terms of assembly, interacts with NXT1, NXT2, E1B-AP5, the REF proteins and with nucleoporins, Nup62, Nup153 and Nup214. Interacts with LUZP4. In terms of tissue distribution, expressed almost exclusively in testis. Also expressed in several cancers.

It localises to the nucleus. The protein resides in the nucleoplasm. It is found in the cytoplasm. Involved in the export of mRNA from the nucleus to the cytoplasm. The chain is Nuclear RNA export factor 2 (NXF2) from Homo sapiens (Human).